A 1037-amino-acid polypeptide reads, in one-letter code: MDMDVMMISMCILASTFMAPGWASTSGFLRVPQSQSIVENEAADFGCEATDSASYLHYEWLHNGREIAYDKRVYRIGSHLHIEAVQREEDVGDYVCIATSLASGAREASPPAKLSVIYLESASVQLLGSNRNELLLKCHVEGASGDEPLQIEWYRDSARLASWGNVHLEEHRLLVRQPSPSDDGLYRCTASNAAGRVMSKQGYVYQANIKCLPRLLKKNQKLPESWGKQTFLCRGKRGGSGGLDQALSPAPEDLRIVQGPAGQLLIKEGDSAALSCLYELPAELQNQRIQLRWRKDGKLLRHVELGGALPIPGHAHDSGKDALLREDARLVLHKQNGTLSFASIIASDAGQYQCQLQLEGHAPLNSSPGLLEVIEQLKFVPQPTSKNLELDAAVAKVHCKAQGTPSPQVQWLREGSLNSSLPDQVEVDINGTLIFRNVRAEHRGNYTCQASSSQGQISATVSINVVVTPKFSVPPVGPIETTEQGSVVMHCQAIGDPKPTIQWDKDLKYLSENNTDRERFSFLENGTLEIRNVQVEDEGSYGCTIGNSAGLKREDVQLVVRSTGDGFAPEETGGDGFLVTRAVLITMTVALAYIVLVVGLMLWCRYRRQARKARLNELSIKEAGGDQPDASVTNGKGSEQEPCLSKQRNGASGKPKSKSNGDAQKSDDTACSQQSRSSKKSVYEQLVLPRSGLSELLQIGRGEFGDVFVGKLKASLVATSAQSDKDADTEKQHSNSENGSGGSGSGSGSGSTTLSTLNEKRRSKTSMDDIEEIKEEEPEQSALEQLVLVKALNKVKDEQACQEFRRQLDLLRGISHKGVVRLFGLCREKDPHYMVLEYTDWGDLKQFLLATAGKVNTATATSSPPALTTSQVLAVAYQIARGMDAIYRSRCTHRDLATRNCVISSEFVVKVSYPALCKDKYSREYHKHRNTLLPVRWLAPECIQEDEYTTKSDIFAYGVLVWELFNQATKLPHEELTSEQVIQRSQAGTLEWTVAEATPDSLKEILLSCWLANPKERPSFSQLGSALSKAMQSVAEK.

Residues 1–23 (MDMDVMMISMCILASTFMAPGWA) form the signal peptide. Ig-like C2-type domains are found at residues 24 to 109 (STSG…REAS), 110 to 199 (PPAK…RVMS), 251 to 365 (PEDL…APLN), 368 to 464 (PGLL…VSIN), and 469 to 559 (PKFS…VQLV). Residues 24–582 (STSGFLRVPQ…GGDGFLVTRA (559 aa)) are Extracellular-facing. 5 disulfide bridges follow: Cys47–Cys96, Cys138–Cys188, Cys276–Cys354, Cys399–Cys448, and Cys491–Cys543. Residues Asn336, Asn418, Asn430, Asn445, Asn513, and Asn525 are each glycosylated (N-linked (GlcNAc...) asparagine). A helical transmembrane segment spans residues 583 to 603 (VLITMTVALAYIVLVVGLMLW). Residues 604–1037 (CRYRRQARKA…SKAMQSVAEK (434 aa)) are Cytoplasmic-facing. 2 disordered regions span residues 623 to 683 (AGGD…KSVY) and 720 to 777 (SAQS…KEEE). Residues 658–676 (KSNGDAQKSDDTACSQQSR) show a composition bias toward polar residues. Ser681 carries the phosphoserine modification. The Protein kinase; inactive domain occupies 693 to 1031 (LSELLQIGRG…QLGSALSKAM (339 aa)). Positions 723 to 734 (SDKDADTEKQHS) are enriched in basic and acidic residues. Gly residues predominate over residues 739-749 (GSGGSGSGSGS). The segment covering 768–777 (DDIEEIKEEE) has biased composition (acidic residues).

This sequence belongs to the protein kinase superfamily. Tyr protein kinase family. Insulin receptor subfamily. Interacts with plexA; component of a receptor complex that mediates the repulsive signaling in response to Semaphorin ligands.

Its subcellular location is the cell membrane. In terms of biological role, acts as a calcium-dependent, homophilic cell adhesion molecule that regulates neural recognition during the development of the nervous system. Component of the repulsive Plexin signaling response to regulate motor axon guidance at the embryonic stage. Also component of a receptor complex that is required in the adult visual system to innervate the lamina layer; specific targeting of R1-R6 axons. The chain is Tyrosine-protein kinase-like otk from Drosophila pseudoobscura pseudoobscura (Fruit fly).